The primary structure comprises 81 residues: Protein Vpu (81 aa).

At 1-6 (MQPIQI) the chain is on the extracellular side. The chain crosses the membrane as a helical span at residues 7–27 (AIAALVVAIIIAIVVWSIVII). Over 28–81 (EYRKILRQRKIDRLIDRLIERAEDSGNESEGEISALVEMGVEMGHHAPWDIDDL) the chain is Cytoplasmic. Residues serine 52 and serine 56 each carry the phosphoserine; by host CK2 modification.

The protein belongs to the HIV-1 VPU protein family. Homopentamer. Interacts with host CD4 and BRTC; these interactions induce proteasomal degradation of CD4. Interacts with host BST2; this interaction leads to the degradation of host BST2. Interacts with host FBXW11. Interacts with host AP1M1; this interaction plays a role in the mistrafficking and subsequent degradation of host BST2. Interacts with host RANBP2; this interaction allows Vpu to down-regulate host BLM sumoylation. Post-translationally, phosphorylated by host CK2. This phosphorylation is necessary for interaction with human BTRC and degradation of CD4.

The protein resides in the host membrane. With respect to regulation, ion channel activity is inhibited by hexamethylene amiloride in vitro. Enhances virion budding by targeting host CD4 and Tetherin/BST2 to proteasome degradation. Degradation of CD4 prevents any unwanted premature interactions between viral Env and its host receptor CD4 in the endoplasmic reticulum. Degradation of antiretroviral protein Tetherin/BST2 is important for virion budding, as BST2 tethers new viral particles to the host cell membrane. Mechanistically, Vpu bridges either CD4 or BST2 to BTRC, a substrate recognition subunit of the Skp1/Cullin/F-box protein E3 ubiquitin ligase, induces their ubiquitination and subsequent proteasomal degradation. The alteration of the E3 ligase specificity by Vpu seems to promote the degradation of host IKBKB, leading to NF-kappa-B down-regulation and subsequent apoptosis. Acts as a viroporin that forms an oligomeric ion channel in membranes. Modulates the host DNA repair mechanisms to promote degradation of nuclear viral cDNA in cells that are already productively infected in order to suppress immune sensing and proviral hyper-integration (superinfection). Manipulates PML-NBs and modulates SUMOylation of host BLM protein thereby enhancing its DNA-end processing activity toward viral unintegrated linear DNA. Also inhibits RAD52-mediated homologous repair of viral cDNA, preventing the generation of dead-end circular forms of single copies of the long terminal repeat and permitting sustained nucleolytic attack. The polypeptide is Protein Vpu (Homo sapiens (Human)).